The primary structure comprises 811 residues: Probable glutamine--tRNA ligase (811 aa).

Positions 190–217 (DAAAGKKKGAKAKNSKQKTVDSGKAKEQ) are disordered. A compositionally biased stretch (basic residues) spans 194–205 (GKKKGAKAKNSK). Residues 207 to 217 (KTVDSGKAKEQ) are compositionally biased toward basic and acidic residues. The short motif at 269 to 279 (PEPNGYLHIGH) is the 'HIGH' region element. ATP-binding positions include 270–272 (EPN) and 276–282 (HIGHSKA). Positions 302 and 447 each coordinate L-glutamine. ATP is bound by residues threonine 466, 495–496 (RL), and 503–505 (MSK). Positions 502–506 (LMSKR) match the 'KMSKS' region motif.

Belongs to the class-I aminoacyl-tRNA synthetase family.

It localises to the cytoplasm. It carries out the reaction tRNA(Gln) + L-glutamine + ATP = L-glutaminyl-tRNA(Gln) + AMP + diphosphate. The protein is Probable glutamine--tRNA ligase (qrs1) of Schizosaccharomyces pombe (strain 972 / ATCC 24843) (Fission yeast).